A 407-amino-acid chain; its full sequence is Argininosuccinate synthase (407 aa).

ATP is bound by residues 10 to 18 (AYSGGLDTS) and Ala-37. L-citrulline is bound by residues Tyr-88 and Ser-93. Gly-118 contributes to the ATP binding site. Positions 120, 124, and 125 each coordinate L-aspartate. Position 124 (Asn-124) interacts with L-citrulline. Residues Arg-128, Ser-180, Ser-189, Glu-265, and Tyr-277 each coordinate L-citrulline.

It belongs to the argininosuccinate synthase family. Type 1 subfamily. In terms of assembly, homotetramer.

The protein resides in the cytoplasm. The catalysed reaction is L-citrulline + L-aspartate + ATP = 2-(N(omega)-L-arginino)succinate + AMP + diphosphate + H(+). It participates in amino-acid biosynthesis; L-arginine biosynthesis; L-arginine from L-ornithine and carbamoyl phosphate: step 2/3. This is Argininosuccinate synthase from Alcanivorax borkumensis (strain ATCC 700651 / DSM 11573 / NCIMB 13689 / SK2).